We begin with the raw amino-acid sequence, 626 residues long: UvrABC system protein C (626 aa).

The region spanning 20–97 (ECSGVYKMLD…IKKFQPKFNI (78 aa)) is the GIY-YIG domain. Positions 207–242 (RELQENLSKKMQELSSQMRFEEAAEIRDRIKALSYV) constitute a UVR domain.

Belongs to the UvrC family. Interacts with UvrB in an incision complex.

It is found in the cytoplasm. Its function is as follows. The UvrABC repair system catalyzes the recognition and processing of DNA lesions. UvrC both incises the 5' and 3' sides of the lesion. The N-terminal half is responsible for the 3' incision and the C-terminal half is responsible for the 5' incision. In Rickettsia typhi (strain ATCC VR-144 / Wilmington), this protein is UvrABC system protein C.